The chain runs to 93 residues: Ferredoxin-2 (93 aa).

Residues 2 to 91 (YKVTLKTPDG…DVVIETHKED (90 aa)) form the 2Fe-2S ferredoxin-type domain. Residues Cys37, Cys42, Cys45, and Cys75 each coordinate [2Fe-2S] cluster.

This sequence belongs to the 2Fe2S plant-type ferredoxin family. The cofactor is [2Fe-2S] cluster.

The protein resides in the plastid. It localises to the chloroplast. Functionally, ferredoxins are iron-sulfur proteins that transfer electrons in a wide variety of metabolic reactions. This Equisetum telmateia (Great horsetail) protein is Ferredoxin-2.